Consider the following 806-residue polypeptide: SH3-containing GRB2-like protein 3-interacting protein 1 (806 aa).

2 disordered regions span residues 1-115 (MMEG…ESHK) and 142-278 (SIGN…QAAT). Composition is skewed to basic and acidic residues over residues 16–32 (RKKE…DRDG) and 40–54 (PPYH…EGGK). Serine 78, serine 104, serine 105, serine 107, serine 149, serine 151, serine 156, and serine 169 each carry phosphoserine. Threonine 180 and threonine 182 each carry phosphothreonine. 2 positions are modified to phosphoserine: serine 236 and phenylalanine 243. Over residues 245–260 (TGTPPPLPPKTVPATP) the composition is skewed to pro residues. Threonine 247 and threonine 259 each carry phosphothreonine. A phosphoserine mark is found at serine 265, aspartate 274, serine 287, serine 289, serine 300, serine 316, and serine 319. Residues 265 to 276 (SPLTVATGNDQA) show a composition bias toward polar residues. Residues 315-324 (FSDASPEHVT) show a composition bias toward basic and acidic residues. The disordered stretch occupies residues 315–533 (FSDASPEHVT…SRGPSPLTMG (219 aa)). Phosphothreonine is present on residues threonine 324, threonine 328, and threonine 335. Residues 335–345 (TPPAASDIPAD) show a composition bias toward low complexity. A Phosphoserine modification is found at alanine 338. Positions 346–369 (SPAPAPPGPTGSAGPPGPPGPRHV) are enriched in pro residues. Residue serine 371 is modified to Phosphoserine. A compositionally biased stretch (basic and acidic residues) spans 377-392 (EVQKKVAEQTFIKDDY). Phosphoserine is present on serine 398. Threonine 409 carries the phosphothreonine modification. The span at 436–453 (TSGASSPARPATPLVPCS) shows a compositional bias: low complexity. Residues 454 to 473 (TTPPPPPPRPPSRPKLPPGK) show a composition bias toward pro residues. Low complexity-rich tracts occupy residues 480 to 490 (SRPFSPPIHSS) and 497 to 520 (PLAR…TTPT). A phosphoserine mark is found at serine 484, serine 505, and glycine 533. The region spanning 537–805 (TLPVAAAFTE…RFAAGKYLAD (269 aa)) is the MHD domain. Interaction with DPF motifs-containing proteins stretches follow at residues 539 to 545 (PVAAAFT), 571 to 573 (SFP), 645 to 648 (TYYN), and 791 to 796 (SLIKKR). Residues 627-806 (MPNLMTHLKK…FAAGKYLADN (180 aa)) are necessary and sufficient to mediate interaction with CANX.

Interacts with proteins essential or regulating the formation of functional clathrin-coated pits. Interacts with CANX. Interacts with AP2A1. Interacts with EPS15. Interacts with SH3GL3. Interacts with AMPH. Interacts with ITSN1 (via SH3 domains). Interacts with and REPS1. In terms of tissue distribution, detected in brain, spinal cord and cerebellum.

It is found in the membrane. It localises to the clathrin-coated pit. Functionally, may function in clathrin-mediated endocytosis. Has both a membrane binding/tubulating activity and the ability to recruit proteins essential to the formation of functional clathrin-coated pits. Has a preference for membranes enriched in phosphatidylserine and phosphoinositides and is required for the endocytosis of the transferrin receptor. May also bind tubulin. May play a role in the regulation of energy homeostasis. The polypeptide is SH3-containing GRB2-like protein 3-interacting protein 1 (Sgip1) (Mus musculus (Mouse)).